Here is a 107-residue protein sequence, read N- to C-terminus: Phosphoribosyl-ATP pyrophosphatase (107 aa).

It belongs to the PRA-PH family.

Its subcellular location is the cytoplasm. It catalyses the reaction 1-(5-phospho-beta-D-ribosyl)-ATP + H2O = 1-(5-phospho-beta-D-ribosyl)-5'-AMP + diphosphate + H(+). It functions in the pathway amino-acid biosynthesis; L-histidine biosynthesis; L-histidine from 5-phospho-alpha-D-ribose 1-diphosphate: step 2/9. This is Phosphoribosyl-ATP pyrophosphatase from Rhizobium johnstonii (strain DSM 114642 / LMG 32736 / 3841) (Rhizobium leguminosarum bv. viciae).